We begin with the raw amino-acid sequence, 1140 residues long: Protein shank (1140 aa).

ANK repeat units lie at residues 144-174 (QGET…HVDF), 178-207 (EGQT…SPNY), 211-242 (IGLT…DIGV), 246-275 (HGNH…QIDA), 279-309 (NGNS…HLAV), and 312-341 (QGQT…KSSV). The tract at residues 337-412 (PKSSVPYRGT…ITPSEYGTMR (76 aa)) is disordered. Residues 351–364 (TRRRLSSTITRRRS) show a composition bias toward basic residues. Residues 388-412 (SAAPSPSPSRSSRTTITPSEYGTMR) are compositionally biased toward low complexity. In terms of domain architecture, PDZ spans 436–529 (ILVIPRGVKG…TITLKVITVD (94 aa)). Composition is skewed to polar residues over residues 640-657 (DQES…NSVS) and 687-704 (TSTF…QLSR). Disordered stretches follow at residues 640-673 (DQES…ASSA), 687-856 (TSTF…AASA), 875-902 (QLKK…STTD), 961-993 (KDSG…HSPN), and 1008-1028 (YGQK…SSTV). Composition is skewed to low complexity over residues 761 to 775 (QHQN…QQHP) and 784 to 793 (PQPIQQQQSS). 2 stretches are compositionally biased toward pro residues: residues 794–806 (IPPP…PPHC) and 823–847 (VPPP…PPPG). Over residues 964 to 974 (GYTSSRTSLEP) the composition is skewed to polar residues. Residues 977–988 (SEEKDHRPHFSL) show a composition bias toward basic and acidic residues. Positions 1015 to 1028 (SVASSSTASSSSTV) are enriched in low complexity. Residues 1078-1140 (WSVDDVIGWL…IESALRGLLQ (63 aa)) form the SAM domain.

This sequence belongs to the SHANK family. Interacts (via PDZ domain) with egl-19 (via C-terminus). As to expression, expressed in the pharynx, pharyngeal-intestinal valve, intestine, rectal epithelial cells, tail neurons, nerve cord and sperm.

It localises to the cell projection. The protein localises to the pseudopodium. It is found in the cytoplasmic vesicle. The protein resides in the postsynaptic density. Scaffold protein that most likely acts in the postsynaptic density (PSD) of excitatory synapses which orchestrates synapse formation and maintenance at neuromuscular junctions. Associates with and trafficks the L-type calcium channel egl-19 to the cell surface of body wall muscles to ensure the function of the calcium channel and therefore maintain the Ca(2+) current density. The maintenance of Ca(2+) also allows for the downstream regulation of Ca(2+)-induced expression of genes such as gem-4. Plays a role in the regulation of the defecation cycle, and this may be in association with the inositol trisphosphate (IP3) receptor itr-1, which in turn mediates periodic calcium release and muscle contractions. Required for normal fertility and pharyngeal pumping. This is Protein shank from Caenorhabditis elegans.